The chain runs to 166 residues: Putative 4-hydroxy-4-methyl-2-oxoglutarate aldolase 2 (166 aa).

An N-acetylalanine modification is found at A2. Substrate contacts are provided by residues 81–84 (GGNP) and R103. D104 is a binding site for a divalent metal cation.

This sequence belongs to the class II aldolase/RraA-like family. As to quaternary structure, homotrimer. A divalent metal cation serves as cofactor.

The enzyme catalyses 4-hydroxy-4-methyl-2-oxoglutarate = 2 pyruvate. The catalysed reaction is oxaloacetate + H(+) = pyruvate + CO2. Catalyzes the aldol cleavage of 4-hydroxy-4-methyl-2-oxoglutarate (HMG) into 2 molecules of pyruvate. Also contains a secondary oxaloacetate (OAA) decarboxylase activity due to the common pyruvate enolate transition state formed following C-C bond cleavage in the retro-aldol and decarboxylation reactions. This chain is Putative 4-hydroxy-4-methyl-2-oxoglutarate aldolase 2, found in Arabidopsis thaliana (Mouse-ear cress).